The chain runs to 327 residues: Flotillin-like protein FloA (327 aa).

A helical membrane pass occupies residues 7-27 (FLVPILIVILLLVFFSLVPVG).

This sequence belongs to the flotillin-like FloA family. Homooligomerizes.

The protein localises to the cell membrane. It is found in the membrane raft. Found in functional membrane microdomains (FMM) that may be equivalent to eukaryotic membrane rafts. FMMs are highly dynamic and increase in number as cells age. Flotillins are thought to be important factors in membrane fluidity. The protein is Flotillin-like protein FloA of Finegoldia magna (strain ATCC 29328 / DSM 20472 / WAL 2508) (Peptostreptococcus magnus).